The following is a 471-amino-acid chain: 3-isopropylmalate dehydratase large subunit (471 aa).

The [4Fe-4S] cluster site is built by Cys347, Cys407, and Cys410.

Belongs to the aconitase/IPM isomerase family. LeuC type 1 subfamily. As to quaternary structure, heterodimer of LeuC and LeuD. [4Fe-4S] cluster is required as a cofactor.

The enzyme catalyses (2R,3S)-3-isopropylmalate = (2S)-2-isopropylmalate. It functions in the pathway amino-acid biosynthesis; L-leucine biosynthesis; L-leucine from 3-methyl-2-oxobutanoate: step 2/4. Its function is as follows. Catalyzes the isomerization between 2-isopropylmalate and 3-isopropylmalate, via the formation of 2-isopropylmaleate. The polypeptide is 3-isopropylmalate dehydratase large subunit (Geobacillus thermodenitrificans (strain NG80-2)).